Reading from the N-terminus, the 122-residue chain is Putative protein adenylyltransferase MJ1547 (122 aa).

The GSX(10)DXD motif motif lies at 11 to 25 (GSYAKNEYTKRSDID). Mg(2+) contacts are provided by D23, D25, and D48.

Belongs to the MntA antitoxin family. Probably forms a complex with cognate toxin MJ1548. It depends on Mg(2+) as a cofactor.

It catalyses the reaction L-tyrosyl-[protein] + ATP = O-(5'-adenylyl)-L-tyrosyl-[protein] + diphosphate. The enzyme catalyses O-(5'-adenylyl)-L-tyrosyl-[protein] + ATP = O-[5'-(adenylyl-(5'-&gt;3')-adenylyl)]-L-tyrosyl-[protein] + diphosphate. In terms of biological role, probable antitoxin component of a putative type VII toxin-antitoxin (TA) system. Neutralizes cognate toxic MJ1548 by di-AMPylation. This Methanocaldococcus jannaschii (strain ATCC 43067 / DSM 2661 / JAL-1 / JCM 10045 / NBRC 100440) (Methanococcus jannaschii) protein is Putative protein adenylyltransferase MJ1547.